The chain runs to 494 residues: SNF1-related protein kinase catalytic subunit alpha KIN12 (494 aa).

The region spanning 19 to 270 is the Protein kinase domain; sequence YRIGKTLGHG…ITEIRQHPWF (252 aa). Residues 25–33 and K48 contribute to the ATP site; that span reads LGHGSFAKV. D142 acts as the Proton acceptor in catalysis. A Phosphothreonine modification is found at T175. The segment at 289–386 is auto-inhibitory domain (AID); the sequence is AKKIEEEIIQ…GLKSNVKDDK (98 aa). The region spanning 291–331 is the UBA domain; it reads KIEEEIIQNVVNIGFDRNHVVDSLANRIQNEATVAYHLILD. Residues 293-494 form a regulatory domain (RD) region; it reads EEEIIQNVVN…VAFLRELGVL (202 aa). The segment at 387 to 494 is PPI; that stretch reads TWTLGLQSQG…VAFLRELGVL (108 aa). The KA1 domain occupies 445-493; that stretch reads AIILPTVIKFEIQLYKVREGKYLLDILRIDGPQFIFFDLCVAFLRELGV.

This sequence belongs to the protein kinase superfamily. CAMK Ser/Thr protein kinase family. SNF1 subfamily. Subunit of a probable heterotrimeric complex consisting of an alpha catalytic subunit, and a beta (KINB) and a gamma (KING or SNF4) non-catalytic regulatory subunits. Autophosphorylated. In terms of tissue distribution, expressed at very low levels.

The catalysed reaction is L-seryl-[protein] + ATP = O-phospho-L-seryl-[protein] + ADP + H(+). It catalyses the reaction L-threonyl-[protein] + ATP = O-phospho-L-threonyl-[protein] + ADP + H(+). With respect to regulation, activated by phosphorylation at Thr-175. Catalytic subunit of the probable trimeric SNF1-related protein kinase (SnRK) complex, a central regulator of cellular energy homeostasis, which, in response to seemingly unrelated darkness, sugar and stress conditions, activates energy-producing pathways and inhibits energy-consuming processes. May also be involved in the regulation of fatty acid synthesis by phosphorylation of acetyl-CoA carboxylase and in assimilation of nitrogen by phosphorylating nitrate reductase. This is SNF1-related protein kinase catalytic subunit alpha KIN12 from Arabidopsis thaliana (Mouse-ear cress).